Consider the following 471-residue polypeptide: MGIARWLNRTVGFFVFALLDIADFLLCYTYKTLDYFLESERKPCYCSSPPEAKAKTEKIIVSERGGYSKVVSLTRSKIHFDEISDTLYSRGPSLLTRLSKLVRSVKCFNYKGLIMRGNVVESCDHHESKKKISKGKKRLMTLNSTVIEKSSTAPRWSDCHCSFCTSWLTSTNRDSLFVKVQQPKDNKKARDNVVFIHGFVSSSAFWTETLFPNFSDSAKSNYRFIAVDLLGYGRSPKPNDSLYTLREHLEMIEKSVISKFKLKTFHIVAHSLGCILALALAVKHPGAIKSLTLLAPPYYKVPKGVQPAQYVMREVARKEVWPPMQFGASVLSWYEHLGRTIGLVLIKNHQLIEFVTRLLTLNRMRTYLIEGFLCHTHNGSFHTLHNIIFGSGAKLDSYLDHVRDHVDCDVAIFHGGKDELIPVECSYSVKSKVPRATVHVIPDKDHITIVVGRQKDFARELELIWQRTKST.

A signal peptide spans 1-45; that stretch reads MGIARWLNRTVGFFVFALLDIADFLLCYTYKTLDYFLESERKPCY. The N-palmitoyl cysteine moiety is linked to residue C46. The region spanning 193–296 is the AB hydrolase-1 domain; that stretch reads VVFIHGFVSS…AIKSLTLLAP (104 aa). H197 is an active-site residue. S271 functions as the Nucleophile in the catalytic mechanism. Catalysis depends on charge relay system residues D418 and H446.

Its subcellular location is the cell membrane. It is found in the secreted. It localises to the cell wall. Functionally, involved in cuticle development and morphogenesis. This Arabidopsis thaliana (Mouse-ear cress) protein is Probable lysophospholipase BODYGUARD 2.